Consider the following 436-residue polypeptide: Proteasome-activating nucleotidase (436 aa).

Residues 7–98 (KDVRDLCEKF…LRSDLQRMKK (92 aa)) are a coiled coil. Residues 223–228 (GTGKTL) and His362 contribute to the ATP site. Residues 434-436 (AYH) form a docks into pockets in the proteasome alpha-ring to cause gate opening region.

The protein belongs to the AAA ATPase family. As to quaternary structure, homohexamer. The hexameric complex has a two-ring architecture resembling a top hat that caps the 20S proteasome core at one or both ends. Upon ATP-binding, the C-terminus of PAN interacts with the alpha-rings of the proteasome core by binding to the intersubunit pockets.

It localises to the cytoplasm. Functionally, ATPase which is responsible for recognizing, binding, unfolding and translocation of substrate proteins into the archaeal 20S proteasome core particle. Is essential for opening the gate of the 20S proteasome via an interaction with its C-terminus, thereby allowing substrate entry and access to the site of proteolysis. Thus, the C-termini of the proteasomal ATPase function like a 'key in a lock' to induce gate opening and therefore regulate proteolysis. Unfolding activity requires energy from ATP hydrolysis, whereas ATP binding alone promotes ATPase-20S proteasome association which triggers gate opening, and supports translocation of unfolded substrates. This chain is Proteasome-activating nucleotidase, found in Methanopyrus kandleri (strain AV19 / DSM 6324 / JCM 9639 / NBRC 100938).